Consider the following 280-residue polypeptide: Large ribosomal subunit protein uL2 (280 aa).

The tract at residues 223 to 280 (VVMNPVDHPHGGGEGRTSGGRHPVTPWGKPTKGARTRNKNKASSKLIIRSRHAKKKGR) is disordered. Basic residues predominate over residues 254-280 (KGARTRNKNKASSKLIIRSRHAKKKGR).

This sequence belongs to the universal ribosomal protein uL2 family. As to quaternary structure, part of the 50S ribosomal subunit. Forms a bridge to the 30S subunit in the 70S ribosome.

Its function is as follows. One of the primary rRNA binding proteins. Required for association of the 30S and 50S subunits to form the 70S ribosome, for tRNA binding and peptide bond formation. It has been suggested to have peptidyltransferase activity; this is somewhat controversial. Makes several contacts with the 16S rRNA in the 70S ribosome. This is Large ribosomal subunit protein uL2 from Dinoroseobacter shibae (strain DSM 16493 / NCIMB 14021 / DFL 12).